A 355-amino-acid polypeptide reads, in one-letter code: Acyl-CoA desaturase 1 (355 aa).

Over 1-68 the chain is Cytoplasmic; sequence MPAHMLQEIS…EGPPPKLEYV (68 aa). The span at 9–20 shows a compositional bias: low complexity; the sequence is ISSSYTTTTTIT. The disordered stretch occupies residues 9-33; it reads ISSSYTTTTTITAPPSGNEREKVKT. A helical transmembrane segment spans residues 69–89; it reads WRNIILMVLLHLGGLYGIILV. N71 serves as a coordination point for substrate. Topologically, residues 90–93 are lumenal; that stretch reads PSCK. Residues 94–114 form a helical membrane-spanning segment; sequence LYTCLFGIFYYMTSALGITAG. The Cytoplasmic segment spans residues 115–213; it reads AHRLWSHRTY…EKLVMFQRRY (99 aa). 2 residues coordinate Fe cation: H116 and H121. Residues 116-121 carry the Histidine box-1 motif; sequence HRLWSH. Substrate is bound by residues N144, R151, and D152. Fe cation-binding residues include H153, H156, and H157. Positions 153 to 157 match the Histidine box-2 motif; that stretch reads HRAHH. Substrate is bound by residues R184 and K185. Residues 214-233 form a helical membrane-spanning segment; sequence YKPGLLLMCFILPTLVPWYC. Over 234–237 the chain is Lumenal; the sequence is WGET. The chain crosses the membrane as a helical span at residues 238–259; sequence FVNSLFVSTFLRYTLVLNATWL. Residue W258 participates in substrate binding. Residues 260–355 lie on the Cytoplasmic side of the membrane; the sequence is VNSAAHLYGY…RTGDGSHKSS (96 aa). Fe cation contacts are provided by H265, H294, H297, and H298. Positions 294–298 match the Histidine box-3 motif; it reads HNYHH.

This sequence belongs to the fatty acid desaturase type 1 family. Fe(2+) is required as a cofactor. Detected in liver (at protein level). Detected in skin and liver. Detected in sebaceous gland, but not in hair follicle. Detected in white and brown adipose tissue, eyelid, Harderian gland, and at lower levels in Meibomian gland, eyeball and adrenal gland. Highly expressed in liver, and detected at low levels in brain, heart, lung, stomach, skeletal muscle and kidney.

The protein localises to the endoplasmic reticulum membrane. It is found in the microsome membrane. The catalysed reaction is octadecanoyl-CoA + 2 Fe(II)-[cytochrome b5] + O2 + 2 H(+) = (9Z)-octadecenoyl-CoA + 2 Fe(III)-[cytochrome b5] + 2 H2O. Stearoyl-CoA desaturase that utilizes O(2) and electrons from reduced cytochrome b5 to introduce the first double bond into saturated fatty acyl-CoA substrates. Catalyzes the insertion of a cis double bond at the Delta-9 position into fatty acyl-CoA substrates including palmitoyl-CoA and stearoyl-CoA. Gives rise to a mixture of 16:1 and 18:1 unsaturated fatty acids. Plays an important role in lipid biosynthesis. Plays an important role in regulating the expression of genes that are involved in lipogenesis and in regulating mitochondrial fatty acid oxidation. Plays an important role in body energy homeostasis. Contributes to the biosynthesis of membrane phospholipids, cholesterol esters and triglycerides. Required for normal development of sebaceous glands. Required for the biosynthesis of normal levels of Delta-9 unsaturated fatty acids and 1-alkyl-2,3-diacylglycerol in the Harderian gland. Required for normal production of meibum, an oily material that prevents drying of the cornea. This is Acyl-CoA desaturase 1 (Scd1) from Mus musculus (Mouse).